A 649-amino-acid polypeptide reads, in one-letter code: Threonine--tRNA ligase (649 aa).

A TGS domain is found at 1-66 (MVQITLPDGS…DNDAQLAIVT (66 aa)). Positions 247-538 (DHRKIGRELD…LIENHAGAMP (292 aa)) are catalytic. The Zn(2+) site is built by C338, H389, and H515.

This sequence belongs to the class-II aminoacyl-tRNA synthetase family. Homodimer. Zn(2+) is required as a cofactor.

It localises to the cytoplasm. It catalyses the reaction tRNA(Thr) + L-threonine + ATP = L-threonyl-tRNA(Thr) + AMP + diphosphate + H(+). Its function is as follows. Catalyzes the attachment of threonine to tRNA(Thr) in a two-step reaction: L-threonine is first activated by ATP to form Thr-AMP and then transferred to the acceptor end of tRNA(Thr). Also edits incorrectly charged L-seryl-tRNA(Thr). This chain is Threonine--tRNA ligase, found in Bordetella bronchiseptica (strain ATCC BAA-588 / NCTC 13252 / RB50) (Alcaligenes bronchisepticus).